A 211-amino-acid chain; its full sequence is Uridine kinase (211 aa).

13 to 20 provides a ligand contact to ATP; it reads GGSGSGKT.

This sequence belongs to the uridine kinase family.

It localises to the cytoplasm. It carries out the reaction uridine + ATP = UMP + ADP + H(+). The catalysed reaction is cytidine + ATP = CMP + ADP + H(+). It participates in pyrimidine metabolism; CTP biosynthesis via salvage pathway; CTP from cytidine: step 1/3. It functions in the pathway pyrimidine metabolism; UMP biosynthesis via salvage pathway; UMP from uridine: step 1/1. In Lactobacillus johnsonii (strain CNCM I-12250 / La1 / NCC 533), this protein is Uridine kinase.